Consider the following 293-residue polypeptide: ATP synthase subunit gamma, mitochondrial (293 aa).

A mitochondrion-targeting transit peptide spans 1–21 (MFALRTAARPAARSVGATRNY).

As to quaternary structure, F-type ATP synthases have 2 components, the catalytic core F(1) and the membrane-embedded component F(0), linked together by a central stalk and a peripheral stalk. The central stalk, also called rotor shaft, is often seen as part of F(1). The peripheral stalk is seen as part of F(0). F(0) contains the membrane channel next to the rotor. F-type ATP synthases form dimers but each monomer functions independently in ATP generation. The dimer consists of 17 different polypeptides: ATP1 (subunit alpha, 3 molecules per monomer, part of F(1)), ATP2 (subunit beta, 3 copies per monomer, part of F(1)), ATP3 (subunit gamma, part of the central stalk), ATP4 (subunit b, part of the peripheral stalk), ATP5/OSCP (subunit 5/OSCP, part of the peripheral stalk), ATP6 (subunit a, part of the peripheral stalk), ATP7 (subunit d, part of the peripheral stalk), ATP8 (subunit 8, part of the peripheral stalk), OLI1 (subunit c, part of the rotor, 10 molecules per monomer), ATP14 (subunit h, part of the peripheral stalk), ATP15 (subunit epsilon, part of the central stalk), ATP16 (subunit delta, part of the central stalk), ATP17 (subunit f, part of the peripheral stalk), ATP18 (subunit i/j, part of the peripheral stalk), ATP19 (subunit k, dimer-specific, at interface between monomers), ATP20 (subunit g, at interface between monomers), TIM11 (subunit e, at interface between monomers).

The protein resides in the mitochondrion inner membrane. Functionally, mitochondrial membrane ATP synthase (F(1)F(0) ATP synthase or Complex V) produces ATP from ADP in the presence of a proton gradient across the membrane which is generated by electron transport complexes of the respiratory chain. F-type ATP synthases consist of two structural domains, F(1) - containing the extramembraneous catalytic core, and F(0) - containing the membrane proton channel, linked together by a central stalk and a peripheral stalk. During catalysis, ATP synthesis in the catalytic domain of F(1) is coupled via a rotary mechanism of the central stalk subunits to proton translocation. Part of the complex F(1) domain and the central stalk which is part of the complex rotary element. The gamma/ATP3 subunit protrudes into the catalytic domain formed of alpha/ATP1(3)beta/ATP2(3). Rotation of the central stalk against the surrounding alpha/ATP1(3)beta/ATP2(3) subunits leads to hydrolysis of ATP in three separate catalytic sites on the beta/ATP2 subunits. In Yarrowia lipolytica (strain CLIB 122 / E 150) (Yeast), this protein is ATP synthase subunit gamma, mitochondrial.